Reading from the N-terminus, the 206-residue chain is Ras-related protein Rab-18 (206 aa).

Met1 is subject to N-acetylmethionine. GTP contacts are provided by Ser17, Gly20, Lys21, Ser22, Ser23, Asp34, Pro35, Thr40, Gly66, Lys123, and Asp125. Ser22 lines the Mg(2+) pocket. 2 short sequence motifs (switch) span residues 31–45 and 63–80; these read DTFD…GVDF and DTAG…YYRG. Thr40 contacts Mg(2+). Position 144 is a phosphoserine (Ser144). Residue Ala152 participates in GTP binding. Cys199 carries the S-palmitoyl cysteine lipid modification. The residue at position 203 (Cys203) is a Cysteine methyl ester. Cys203 carries S-geranylgeranyl cysteine lipidation. Residues 204–206 constitute a propeptide, removed in mature form; sequence SVL.

Belongs to the small GTPase superfamily. Rab family. Interacts (in GTP-bound form) with ZFYVE1. Interacts with ZW10 and this interaction is enhanced in the presence of ZFYVE1. Interacts with BSCL2. In terms of assembly, (Microbial infection) Interacts with Hepatitis C virus (HCV) non-structural protein 5A; this interaction may promote the association of NS5A and other viral replicase components with lipid droplets. Mg(2+) is required as a cofactor. Ubiquitous.

It is found in the endoplasmic reticulum membrane. The protein localises to the golgi apparatus. It localises to the cis-Golgi network membrane. The protein resides in the lipid droplet. Its subcellular location is the apical cell membrane. It carries out the reaction GTP + H2O = GDP + phosphate + H(+). Its activity is regulated as follows. Regulated by guanine nucleotide exchange factor (GEF) RAB3GAP1-RAB3GAP2 complex at the cis-Golgi membrane which promotes the exchange of bound GDP for free GTP. Regulated by GTPase activating protein (GAP) TBC1D20 at the ER membrane which increases the GTP hydrolysis activity. Inhibited by GDP dissociation inhibitors (GDIs) which prevent Rab-GDP dissociation. Functionally, the small GTPases Rab are key regulators of intracellular membrane trafficking, from the formation of transport vesicles to their fusion with membranes. Rabs cycle between an inactive GDP-bound form and an active GTP-bound form that is able to recruit to membranes different sets of downstream effectors directly responsible for vesicle formation, movement, tethering and fusion. RAB18 is required for the localization of ZFYVE1 to lipid droplets and for its function in mediating the formation of endoplasmic reticulum-lipid droplets (ER-LD) contacts. Also required for maintaining endoplasmic reticulum structure. Plays a role in apical endocytosis/recycling. Plays a key role in eye and brain development and neurodegeneration. This Homo sapiens (Human) protein is Ras-related protein Rab-18.